Consider the following 118-residue polypeptide: uncharacterized protein (118 aa).

The disordered stretch occupies residues 25 to 85 (AEQPGSGGIA…SSSSTPSRAR (61 aa)). Over residues 71 to 83 (RPSASSSSSTPSR) the composition is skewed to low complexity.

This is an uncharacterized protein from Azospirillum brasilense.